Reading from the N-terminus, the 468-residue chain is UDP-N-acetylmuramoyl-L-alanine--L-glutamate ligase (468 aa).

Residue 122–128 (GTKGKST) coordinates ATP.

The protein belongs to the MurCDEF family. MurD2 subfamily.

It is found in the cytoplasm. The enzyme catalyses UDP-N-acetyl-alpha-D-muramoyl-L-alanine + L-glutamate + ATP = UDP-N-acetyl-alpha-D-muramoyl-L-alanyl-L-glutamate + ADP + phosphate + H(+). It functions in the pathway cell wall biogenesis; peptidoglycan biosynthesis. In terms of biological role, cell wall formation. Catalyzes the addition of L-glutamate to the nucleotide precursor UDP-N-acetylmuramoyl-L-alanine. This chain is UDP-N-acetylmuramoyl-L-alanine--L-glutamate ligase, found in Xanthomonas campestris pv. campestris (strain 8004).